Reading from the N-terminus, the 324-residue chain is NADH-ubiquinone oxidoreductase chain 1 (324 aa).

8 helical membrane-spanning segments follow: residues 3 to 23 (LLFM…AVAF), 73 to 93 (LLFI…WTPF), 106 to 126 (ILFI…SGWA), 151 to 171 (ALII…AFAI), 175 to 195 (FTWF…STLA), 226 to 246 (LFFL…TIIF), 255 to 275 (TLTT…FLWV), and 295 to 315 (FLPL…SLLF).

Belongs to the complex I subunit 1 family.

Its subcellular location is the mitochondrion inner membrane. The enzyme catalyses a ubiquinone + NADH + 5 H(+)(in) = a ubiquinol + NAD(+) + 4 H(+)(out). In terms of biological role, core subunit of the mitochondrial membrane respiratory chain NADH dehydrogenase (Complex I) that is believed to belong to the minimal assembly required for catalysis. Complex I functions in the transfer of electrons from NADH to the respiratory chain. The immediate electron acceptor for the enzyme is believed to be ubiquinone. This Aquarana catesbeiana (American bullfrog) protein is NADH-ubiquinone oxidoreductase chain 1 (MT-ND1).